A 373-amino-acid chain; its full sequence is SH3 domain-binding protein 5-like (373 aa).

A disordered region spans residues 1 to 53 (MEGKEGPSCEVRLPTPGAEREGPIHPELGAFGETASNTIKLSESSNDGKKEEI). A compositionally biased stretch (polar residues) spans 34 to 45 (TASNTIKLSESS). 2 coiled-coil regions span residues 55–98 (EELD…ESAR) and 170–272 (WQEM…SEEI). Disordered regions lie at residues 276-305 (RTQS…TGPP) and 344-373 (TGAV…SVSL). The segment covering 344–358 (TGAVECGGSRERGGD) has biased composition (basic and acidic residues).

The protein belongs to the SH3BP5 family.

Functionally, functions as a guanine nucleotide exchange factor (GEF) for rab11a. This chain is SH3 domain-binding protein 5-like (sh3bp5l), found in Xenopus tropicalis (Western clawed frog).